Reading from the N-terminus, the 200-residue chain is Cysteine-rich venom protein VAR8 (200 aa).

Positions 1-22 are cleaved as a signal peptide; the sequence is MILLKLYLTLAAILCQSRGTTS. The SCP domain occupies 41 to 169; the sequence is NKHNDLRRTV…PLKYFLVCQY (129 aa). Cystine bridges form between Cys77–Cys156, Cys95–Cys170, Cys151–Cys167, and Cys189–Cys196.

The protein belongs to the CRISP family. Post-translationally, contains 8 disulfide bonds. As to expression, expressed by the venom gland.

It is found in the secreted. Functionally, blocks ryanodine receptors, and potassium channels. The chain is Cysteine-rich venom protein VAR8 from Varanus acanthurus (Ridge-tailed monitor).